The following is a 1620-amino-acid chain: Myb-like protein X (1620 aa).

The segment covering 1–13 (MSTIGNNASSIGN) has biased composition (polar residues). Disordered regions lie at residues 1 to 57 (MSTI…TTTT), 176 to 204 (TGSGGIGGGGSGSSTPNRGRFSGKTSNIG), 294 to 318 (FFQDDNENGNGNGNGSGSGSNNMTE), and 450 to 849 (KEEK…TKSA). The span at 28 to 57 (PPTTTTTTTTTTTTTTTTPTTTTPTTTTTT) shows a compositional bias: low complexity. Positions 177-187 (GSGGIGGGGSG) are enriched in gly residues. One can recognise an SWIRM domain in the interval 310-421 (GSGSNNMTEI…CFVNSGDYMN (112 aa)). Positions 450-497 (KEEKERLEREEKERLEREEKQEKEEKERLEKEEKERLEREEKQEKEEK) are enriched in basic and acidic residues. Over residues 498–511 (EEKEEKEENEEKEE) the composition is skewed to acidic residues. A compositionally biased stretch (basic and acidic residues) spans 512 to 568 (KEEKEKEEKEEKEKQEKEDDKEKQENENEQEKIEKKENKNDSQNKEIKENHDKKDET). Residues 570–598 (DSNNTTTTTTTTTTTSTNTLVAESSSSSS) show a composition bias toward low complexity. Over residues 606–628 (KEMKEQPVQENKDKEMMETDTTK) the composition is skewed to basic and acidic residues. The segment covering 629–645 (ENNGVETTETTNQTTDS) has biased composition (low complexity). Positions 647 to 798 (ETDKEMKDQP…EIKKDKLKEN (152 aa)) are enriched in basic and acidic residues. Positions 799-834 (EEVEGEIEGENDEGEVVEEDEDEEMEIEEDEEDEED) are enriched in acidic residues. The region spanning 925 to 977 (PEEFGWTDIETLLLLEGIEIFRDNWQEISDYIGGSKTPEQCLTHFIRLPIEDE) is the SANT domain. The tract at residues 1049 to 1506 (QPSKEELERI…DDDEDVEMET (458 aa)) is disordered. Composition is skewed to basic and acidic residues over residues 1051–1195 (SKEE…DKSD), 1219–1255 (ETVEMNQDDHVKIDEKETKENDKKSITEEENQQKDDN), and 1264–1302 (HNKEIEKDDNKENENEKEKENENKNEKQIENENEKEKDL). The segment covering 1303–1325 (NNLSESQSSNDQSKSNEQMSSDN) has biased composition (low complexity). The segment covering 1338–1350 (TQITSKEQNITTD) has biased composition (polar residues). Low complexity-rich tracts occupy residues 1358–1382 (TPTTTTPATLPATPISESNTTTTNT) and 1390–1416 (NETNKTNENNSNNNNTNEENKTAESNN). Composition is skewed to acidic residues over residues 1467–1481 (EENEMEEVEEEENDL) and 1493–1504 (VGEEDDDEDVEM).

It is found in the nucleus. The polypeptide is Myb-like protein X (mybX) (Dictyostelium discoideum (Social amoeba)).